The following is a 185-amino-acid chain: Adenine phosphoribosyltransferase (185 aa).

It belongs to the purine/pyrimidine phosphoribosyltransferase family. In terms of assembly, homodimer.

It localises to the cytoplasm. The enzyme catalyses AMP + diphosphate = 5-phospho-alpha-D-ribose 1-diphosphate + adenine. Its pathway is purine metabolism; AMP biosynthesis via salvage pathway; AMP from adenine: step 1/1. Catalyzes a salvage reaction resulting in the formation of AMP, that is energically less costly than de novo synthesis. The chain is Adenine phosphoribosyltransferase from Arthrobacter sp. (strain FB24).